The sequence spans 127 residues: Aspartate 1-decarboxylase (127 aa).

S25 (schiff-base intermediate with substrate; via pyruvic acid) is an active-site residue. Residue S25 is modified to Pyruvic acid (Ser). T57 contacts substrate. Residue Y58 is the Proton donor of the active site. Residue 73 to 75 coordinates substrate; it reads GAA.

It belongs to the PanD family. In terms of assembly, heterooctamer of four alpha and four beta subunits. It depends on pyruvate as a cofactor. Post-translationally, is synthesized initially as an inactive proenzyme, which is activated by self-cleavage at a specific serine bond to produce a beta-subunit with a hydroxyl group at its C-terminus and an alpha-subunit with a pyruvoyl group at its N-terminus.

Its subcellular location is the cytoplasm. It catalyses the reaction L-aspartate + H(+) = beta-alanine + CO2. It functions in the pathway cofactor biosynthesis; (R)-pantothenate biosynthesis; beta-alanine from L-aspartate: step 1/1. Its function is as follows. Catalyzes the pyruvoyl-dependent decarboxylation of aspartate to produce beta-alanine. In Neisseria meningitidis serogroup C / serotype 2a (strain ATCC 700532 / DSM 15464 / FAM18), this protein is Aspartate 1-decarboxylase.